The chain runs to 269 residues: MEFWGAEVKSGEPLTVQPGDGMVLHLSQASLGELKKDKSESVCLSVNIDGKKLVLGTLNSEKVPQQQFDLVFDRDFELSHNLKSGSVYFFGYKATNPFEEEEDDEDDYDESDEDIPLTLANSGKPEPKEAGKSNAGKDSASGKQKVRIVEPTKDDEDESSDDDDSDMGEDEDDSDDSEEETPKKAEPAKRRKADSATKTPVTDKKAKLTTPQKTDGKKGGGHVATPHPSKQASKTPKSAGSHHCKPCNRSFGSEGALDSHSKAKHSAGK.

The segment at 97–269 (PFEEEEDDED…HSKAKHSAGK (173 aa)) is disordered. 2 stretches are compositionally biased toward acidic residues: residues 98-115 (FEEEEDDEDDYDESDEDI) and 153-179 (KDDEDESSDDDDSDMGEDEDDSDDSEE). Over residues 228-238 (PSKQASKTPKS) the composition is skewed to polar residues. The C2H2-type zinc finger occupies 242-265 (HHCKPCNRSFGSEGALDSHSKAKH).

This sequence belongs to the histone deacetylase HD2 family. As to expression, predominantly expressed in ovaries. Accumulates predominantly in the micropylar region of the ovule's integument.

Its subcellular location is the nucleus. The protein resides in the nucleolus. Functionally, mediates the deacetylation of lysine residues on the N-terminal part of the core histones (H2A, H2B, H3 and H4). Histone deacetylation gives a tag for epigenetic repression and plays an important role in transcriptional regulation, cell cycle progression and developmental events. The sequence is that of Histone deacetylase HDT1 (HDT1) from Solanum chacoense (Chaco potato).